A 700-amino-acid polypeptide reads, in one-letter code: Elongation factor G 1 (700 aa).

The tr-type G domain occupies Glu-8–Ala-290. Residues Ala-17–Thr-24, Asp-88–His-92, and Asn-142–Asp-145 each bind GTP.

The protein belongs to the TRAFAC class translation factor GTPase superfamily. Classic translation factor GTPase family. EF-G/EF-2 subfamily.

Its subcellular location is the cytoplasm. Catalyzes the GTP-dependent ribosomal translocation step during translation elongation. During this step, the ribosome changes from the pre-translocational (PRE) to the post-translocational (POST) state as the newly formed A-site-bound peptidyl-tRNA and P-site-bound deacylated tRNA move to the P and E sites, respectively. Catalyzes the coordinated movement of the two tRNA molecules, the mRNA and conformational changes in the ribosome. This Bordetella bronchiseptica (strain ATCC BAA-588 / NCTC 13252 / RB50) (Alcaligenes bronchisepticus) protein is Elongation factor G 1.